A 572-amino-acid polypeptide reads, in one-letter code: Probable transporter MCH1 (572 aa).

The span at 1 to 29 shows a compositional bias: polar residues; it reads MSSSAPDDTQASRLDADQISTRSSSYASD. Residues 1–39 form a disordered region; sequence MSSSAPDDTQASRLDADQISTRSSSYASDNDTDSTETRI. The N-linked (GlcNAc...) asparagine glycan is linked to Asn-30. Transmembrane regions (helical) follow at residues 50–70, 89–109, 116–136, 159–179, 193–213, 232–252, 335–355, 426–446, 459–479, and 488–508; these read LLAF…VVFS, AVAI…GYIC, PLAL…AGVY, FLML…MAAV, GLAL…LSQA, VFRF…LGTF, LAFL…GTII, FMAF…SGLV, LVGA…TIIW, and YGLI…VYSA. Asn-515 carries N-linked (GlcNAc...) asparagine glycosylation. The chain crosses the membrane as a helical span at residues 539–559; that stretch reads PTYWAETITVWIAVGLLLWAW.

This sequence belongs to the major facilitator superfamily.

The protein localises to the vacuole membrane. Its function is as follows. Probable transporter. The sequence is that of Probable transporter MCH1 (MCH1) from Gibberella zeae (strain ATCC MYA-4620 / CBS 123657 / FGSC 9075 / NRRL 31084 / PH-1) (Wheat head blight fungus).